Consider the following 459-residue polypeptide: Bifunctional protein GlmU (459 aa).

Residues 1-229 (MSNYAIILAA…FDESLGVNDR (229 aa)) are pyrophosphorylase. Residues 8–11 (LAAG), K22, Q72, and 77–78 (GT) contribute to the UDP-N-acetyl-alpha-D-glucosamine site. D102 contributes to the Mg(2+) binding site. UDP-N-acetyl-alpha-D-glucosamine contacts are provided by G139, E154, N169, and N227. N227 serves as a coordination point for Mg(2+). The tract at residues 230-250 (VALATAEKVMRHRIARQHMVN) is linker. The segment at 251–459 (GVTVVNPDSA…NKKPHHPSQK (209 aa)) is N-acetyltransferase. Residues R332 and K350 each contribute to the UDP-N-acetyl-alpha-D-glucosamine site. The active-site Proton acceptor is the H362. Y365 and N376 together coordinate UDP-N-acetyl-alpha-D-glucosamine. Residues A379, 385–386 (NY), S404, A422, and R439 each bind acetyl-CoA.

The protein in the N-terminal section; belongs to the N-acetylglucosamine-1-phosphate uridyltransferase family. It in the C-terminal section; belongs to the transferase hexapeptide repeat family. In terms of assembly, homotrimer. It depends on Mg(2+) as a cofactor.

The protein localises to the cytoplasm. The catalysed reaction is alpha-D-glucosamine 1-phosphate + acetyl-CoA = N-acetyl-alpha-D-glucosamine 1-phosphate + CoA + H(+). It carries out the reaction N-acetyl-alpha-D-glucosamine 1-phosphate + UTP + H(+) = UDP-N-acetyl-alpha-D-glucosamine + diphosphate. It participates in nucleotide-sugar biosynthesis; UDP-N-acetyl-alpha-D-glucosamine biosynthesis; N-acetyl-alpha-D-glucosamine 1-phosphate from alpha-D-glucosamine 6-phosphate (route II): step 2/2. Its pathway is nucleotide-sugar biosynthesis; UDP-N-acetyl-alpha-D-glucosamine biosynthesis; UDP-N-acetyl-alpha-D-glucosamine from N-acetyl-alpha-D-glucosamine 1-phosphate: step 1/1. It functions in the pathway bacterial outer membrane biogenesis; LPS lipid A biosynthesis. Functionally, catalyzes the last two sequential reactions in the de novo biosynthetic pathway for UDP-N-acetylglucosamine (UDP-GlcNAc). The C-terminal domain catalyzes the transfer of acetyl group from acetyl coenzyme A to glucosamine-1-phosphate (GlcN-1-P) to produce N-acetylglucosamine-1-phosphate (GlcNAc-1-P), which is converted into UDP-GlcNAc by the transfer of uridine 5-monophosphate (from uridine 5-triphosphate), a reaction catalyzed by the N-terminal domain. This Streptococcus agalactiae serotype V (strain ATCC BAA-611 / 2603 V/R) protein is Bifunctional protein GlmU.